Here is a 1013-residue protein sequence, read N- to C-terminus: Hemoglobin-binding protein A (1013 aa).

A signal peptide spans 1 to 24 (MTNFKFSLLACSIAFALNASTAYA). A run of 8 repeats spans residues 26 to 29 (QPTN), 30 to 33 (QPTN), 34 to 37 (QPTN), 38 to 41 (QPTN), 42 to 45 (QPTN), 46 to 49 (QPTN), 50 to 53 (QPTN), and 54 to 57 (QPTN). The 8 X 4 AA tandem repeats of Q-P-T-N stretch occupies residues 26-57 (QPTNQPTNQPTNQPTNQPTNQPTNQPTNQPTN). Over residues 26-58 (QPTNQPTNQPTNQPTNQPTNQPTNQPTNQPTNQ) the composition is skewed to low complexity. Positions 26-61 (QPTNQPTNQPTNQPTNQPTNQPTNQPTNQPTNQDSN) are disordered. Residues 67–74 (EQINVSGS) carry the TonB box motif. The region spanning 78 to 205 (SDSKTPPKIA…LGGSVIYKTK (128 aa)) is the TBDR plug domain. The TBDR beta-barrel domain maps to 213–1013 (NKDYYVSYKK…NYKMSVQFEF (801 aa)). The TonB C-terminal box signature appears at 996–1013 (NRFYAPGRNYKMSVQFEF).

This sequence belongs to the TonB-dependent receptor family. Hemoglobin/haptoglobin binding protein subfamily.

The protein localises to the cell outer membrane. Acts as a receptor for hemoglobin of the human host and is required for heme uptake. This is Hemoglobin-binding protein A (hgbA) from Haemophilus influenzae.